Reading from the N-terminus, the 171-residue chain is Moubatin (171 aa).

The first 15 residues, 1–15 (MMLVLTTLIFSFSAS), serve as a signal peptide directing secretion. 3 disulfides stabilise this stretch: Cys-23–Cys-144, Cys-55–Cys-166, and Cys-118–Cys-145.

Belongs to the calycin superfamily. Lipocalin family. In terms of processing, the N-terminus is blocked. Expressed in salivary glands.

The protein localises to the secreted. Functionally, tick salivary platelet aggregation inhibitor that plays an important part in the anti-hemostatic strategy of ticks. Acts by scavenging thromboxane A2 (TXA2), a potent inducer of platelet aggregation and blood vessel constriction. As a consequence, is a specific inhibitor of collagen-induced platelet aggregation. In addition, it also acts as a potent inhibitor of TXA2-mediated vasoconstriction. Has also been found to bind leukotriene B4 (LTB4) (which also derives from arachidonic acid, as TXA2) with affinities in the nanomolar range. It does not interact with complement protein C5. This chain is Moubatin, found in Ornithodoros moubata (Soft tick).